Here is a 336-residue protein sequence, read N- to C-terminus: UDP-N-acetylglucosamine--N-acetylmuramyl-(pentapeptide) pyrophosphoryl-undecaprenol N-acetylglucosamine transferase (336 aa).

Residues 10 to 12 (TGG), Asn-124, Arg-157, Ser-179, and Gln-277 each bind UDP-N-acetyl-alpha-D-glucosamine.

Belongs to the glycosyltransferase 28 family. MurG subfamily.

Its subcellular location is the cell inner membrane. It carries out the reaction di-trans,octa-cis-undecaprenyl diphospho-N-acetyl-alpha-D-muramoyl-L-alanyl-D-glutamyl-meso-2,6-diaminopimeloyl-D-alanyl-D-alanine + UDP-N-acetyl-alpha-D-glucosamine = di-trans,octa-cis-undecaprenyl diphospho-[N-acetyl-alpha-D-glucosaminyl-(1-&gt;4)]-N-acetyl-alpha-D-muramoyl-L-alanyl-D-glutamyl-meso-2,6-diaminopimeloyl-D-alanyl-D-alanine + UDP + H(+). The protein operates within cell wall biogenesis; peptidoglycan biosynthesis. Cell wall formation. Catalyzes the transfer of a GlcNAc subunit on undecaprenyl-pyrophosphoryl-MurNAc-pentapeptide (lipid intermediate I) to form undecaprenyl-pyrophosphoryl-MurNAc-(pentapeptide)GlcNAc (lipid intermediate II). In Wolinella succinogenes (strain ATCC 29543 / DSM 1740 / CCUG 13145 / JCM 31913 / LMG 7466 / NCTC 11488 / FDC 602W) (Vibrio succinogenes), this protein is UDP-N-acetylglucosamine--N-acetylmuramyl-(pentapeptide) pyrophosphoryl-undecaprenol N-acetylglucosamine transferase.